The primary structure comprises 382 residues: Alanine racemase 1 (382 aa).

Catalysis depends on lysine 39, which acts as the Proton acceptor; specific for D-alanine. Residue lysine 39 is modified to N6-(pyridoxal phosphate)lysine. Residue arginine 138 coordinates substrate. Tyrosine 265 functions as the Proton acceptor; specific for L-alanine in the catalytic mechanism. Methionine 312 lines the substrate pocket.

Belongs to the alanine racemase family. The cofactor is pyridoxal 5'-phosphate.

The enzyme catalyses L-alanine = D-alanine. Its pathway is amino-acid biosynthesis; D-alanine biosynthesis; D-alanine from L-alanine: step 1/1. Catalyzes the interconversion of L-alanine and D-alanine. May also act on other amino acids. In Staphylococcus aureus (strain N315), this protein is Alanine racemase 1 (alr1).